Reading from the N-terminus, the 583-residue chain is MLO-like protein 6 (583 aa).

The Extracellular portion of the chain corresponds to 1-15 (MADQVKEKTLEETST). A helical membrane pass occupies residues 16 to 36 (WAVAVVCFVLLLISIVIEKLI). The Cytoplasmic segment spans residues 37–61 (HKIGSWFKKKNKKALYEALEKVKAE). A helical membrane pass occupies residues 62–82 (LMLMGFISLLLTIGQGYISNI). Topologically, residues 83 to 161 (CIPKNIAASM…VSAYGMHQLH (79 aa)) are extracellular. The helical transmembrane segment at 162-182 (IFIFVLAVCHVIYCIVTYALG) threads the bilayer. The Cytoplasmic segment spans residues 183–284 (KTKMRRWKKW…KYIQRSLEED (102 aa)). Residues 285–305 (FKTIVEINPVIWFIAVLFLLT) form a helical membrane-spanning segment. Residues 306-314 (NTNGLNSYL) lie on the Extracellular side of the membrane. A helical membrane pass occupies residues 315–335 (WLPFIPFIVILIVGTKLQVII). The Cytoplasmic portion of the chain corresponds to 336–368 (TKLGLRIQEKGDVVKGTPLVQPGDHFFWFGRPR). The chain crosses the membrane as a helical span at residues 369 to 389 (FILFLIHLVLFTNAFQLAFFV). The Extracellular segment spans residues 390 to 411 (WSTYEFGLKNCFHESRVDVIIR). The helical transmembrane segment at 412-432 (ISIGLLVQILCSYVTLPLYAL) threads the bilayer. The Cytoplasmic segment spans residues 433-583 (VTQMGSKMKP…ISLRDFSFKR (151 aa)). The calmodulin-binding stretch occupies residues 447–468 (ERVATALKSWHHTAKKNIKHGR). The tract at residues 461-583 (KKNIKHGRTS…ISLRDFSFKR (123 aa)) is disordered. Residues 470–484 (SESTTPFSSRPTTPT) show a composition bias toward low complexity. Positions 541 to 551 (RFGEEESEKKF) are enriched in basic and acidic residues.

The protein belongs to the MLO family.

The protein resides in the membrane. In terms of biological role, may be involved in modulation of pathogen defense and leaf cell death. Activity seems to be regulated by Ca(2+)-dependent calmodulin binding and seems not to require heterotrimeric G proteins. This Arabidopsis thaliana (Mouse-ear cress) protein is MLO-like protein 6 (MLO6).